The sequence spans 890 residues: Protein FAM171A1 (890 aa).

An N-terminal signal peptide occupies residues 1–21; sequence MSRSAALLLCLLGCHVWKAVT. At 22–303 the chain is on the extracellular side; the sequence is KTLREPGAGA…VTQDITTYHT (282 aa). N-linked (GlcNAc...) asparagine glycosylation is found at asparagine 190 and asparagine 194. The helical transmembrane segment at 304–324 threads the bilayer; that stretch reads VFLLAILGGMAFILLVLLCLL. Residues 325 to 890 are Cytoplasmic-facing; that stretch reads LYYCRRKCMK…ERPLMAFNIK (566 aa). Phosphoserine occurs at positions 358, 360, 371, 422, 443, and 525. 2 disordered regions span residues 730 to 759 and 818 to 890; these read AGRN…RGDA and EGSS…FNIK. Residues 747–757 show a composition bias toward basic and acidic residues; the sequence is NEPKSARKGRG. Polar residues predominate over residues 822 to 833; sequence RRSGGQLPSLQE. A phosphoserine mark is found at serine 849 and serine 855. Positions 858-869 are enriched in acidic residues; it reads EEEEDDDDDDQG. Positions 870–883 are enriched in basic and acidic residues; it reads EDKKSPWQKREERP.

The protein belongs to the FAM171 family. As to quaternary structure, interacts with ADAM10, NSG1 and OAZ1.

The protein resides in the cell membrane. In terms of biological role, involved in the regulation of the cytoskeletal dynamics, plays a role in actin stress fiber formation. The polypeptide is Protein FAM171A1 (FAM171A1) (Pongo abelii (Sumatran orangutan)).